The chain runs to 83 residues: MLKSFLIFLVRFYQKNISPAFPASCRYCPTCSTYMIEAIQKHGLKGVLMGIARILRCHPLAHGGNDPVPDHFSLRRNKTDISD.

Residues 63 to 83 are disordered; sequence GGNDPVPDHFSLRRNKTDISD. The segment covering 68 to 83 has biased composition (basic and acidic residues); it reads VPDHFSLRRNKTDISD.

It belongs to the UPF0161 family.

The protein localises to the cell membrane. In terms of biological role, could be involved in insertion of integral membrane proteins into the membrane. This chain is Putative membrane protein insertion efficiency factor, found in Streptococcus agalactiae serotype III (strain NEM316).